The primary structure comprises 414 residues: Esterase FrsA (414 aa).

It belongs to the FrsA family.

It carries out the reaction a carboxylic ester + H2O = an alcohol + a carboxylate + H(+). Its function is as follows. Catalyzes the hydrolysis of esters. The chain is Esterase FrsA from Shigella boydii serotype 18 (strain CDC 3083-94 / BS512).